Here is a 377-residue protein sequence, read N- to C-terminus: Pseudouridylate synthase RPUSD4, mitochondrial (377 aa).

Positions 51–70 (LRAQKQQQKTKEPAPTNPVQ) are disordered. Residue D153 is part of the active site.

Belongs to the pseudouridine synthase RluA family. In terms of assembly, interacts with 16S mt-rRNA, mt-tRNA(Phe) and mt-tRNA(Met). Forms a regulatory protein-RNA complex, consisting of RCC1L, NGRN, RPUSD3, RPUSD4, TRUB2, FASTKD2 and 16S mt-rRNA.

It is found in the mitochondrion matrix. The protein resides in the nucleus. It localises to the cytoplasm. It carries out the reaction uridine in 5S rRNA = pseudouridine in 5S rRNA. The enzyme catalyses a uridine in tRNA = a pseudouridine in tRNA. It catalyses the reaction a uridine in mRNA = a pseudouridine in mRNA. Catalyzes uridine to pseudouridine isomerization (pseudouridylation) of different mitochondrial RNA substrates. Acts on position 1397 in 16S mitochondrial ribosomal RNA (16S mt-rRNA). This modification is required for the assembly of 16S mt-rRNA into a functional mitochondrial ribosome. As a component of a functional protein-RNA module, consisting of RCC1L, NGRN, RPUSD3, RPUSD4, TRUB2, FASTKD2 and 16S mt-rRNA, controls 16S mt-rRNA abundance and is required for intra-mitochondrial translation. Acts on position 39 in mitochondrial tRNA(Phe). Also catalyzes pseudouridylation of mRNAs in nucleus: acts as a regulator of pre-mRNA splicing by mediating pseudouridylation of pre-mRNAs at locations associated with alternatively spliced regions. Pseudouridylation of pre-mRNAs near splice sites directly regulates mRNA splicing and mRNA 3'-end processing. The chain is Pseudouridylate synthase RPUSD4, mitochondrial from Bos taurus (Bovine).